The sequence spans 1162 residues: MEPEEERIRYSQRLRGTMRRRYEDDGISDDEIEGKRTFDLEEKLHTNKYNANFVTFMEGKDFNVEYIQRGGLRDPLIFKNSDGLGIKMPDPDFTVNDVKMCVGSRRMVDVMDVNTQKGIEMTMAQWTRYYETPEEEREKLYNVISLEFSHTRLENMVQRPSTVDFIDWVDNMWPRHLKESQTESTNAILEMQYPKVQKYCLMSVRGCYTDFHVDFGGTSVWYHIHQGGKVFWLIPPTAHNLELYENWLLSGKQGDIFLGDRVSDCQRIELKQGYTFVIPSGWIHAVYTPTDTLVFGGNFLHSFNIPMQLKIYNIEDRTRVPNKFRYPFYYEMCWYVLERYVYCITNRSHLTKEFQKESLSMDLELNGLESGNGDEEAVDREPRRLSSRRSVLTSPVANGVNLDYDGLGKTCRSLPSLKKTLAGDSSSDCSRGSHNGQVWDPQCAPRKDRQVHLTHFELEGLRCLVDKLESLPLHKKCVPTGIEDEDALIADVKILLEELANSDPKLALTGVPIVQWPKRDKLKFPTRPKVRVPTIPITKPHTMKPAPRLTPVRPAAASPIVSGARRRRVRCRKCKACVQGECGVCHYCRDMKKFGGPGRMKQSCVLRQCLAPRLPHSVTCSLCGEVDQNEETQDFEKKLMECCICNEIVHPGCLQMDGEGLLNEELPNCWECPKCYQEDSSEKAQKRKMEESDEEAVQAKVLRPLRSCDEPLTPPPHSPTSMLQLIHDPVSPRGMVTRSSPGAGPSDHHSASRDERFKRRQLLRLQATERTMVREKENNPSGKKELSEVEKAKIRGSYLTVTLQRPTKELHGTSIVPKLQAITASSANLRHSPRVLVQHCPARTPQRGDEEGLGGEEEEEEEEEEEDDSAEEGGAARLNGRGSWAQDGDESWMQREVWMSVFRYLSRRELCECMRVCKTWYKWCCDKRLWTKIDLSRCKAIVPQALSGIIKRQPVSLDLSWTNISKKQLTWLVNRLPGLKDLLLAGCSWSAVSALSTSSCPLLRTLDLRWAVGIKDPQIRDLLTPPADKPGQDNRSKLRNMTDFRLAGLDITDATLRLIIRHMPLLSRLDLSHCSHLTDQSSNLLTAVGSSTRYSLTELNMAGCNKLTDQTLIYLRRIANVTLIDLRGCKQITRKACEHFISDLSINSLYCLSDEKLIQKIS.

At S28 the chain carries Phosphoserine. The 169-residue stretch at 148-316 folds into the JmjC domain; it reads FSHTRLENMV…MQLKIYNIED (169 aa). T209 is a binding site for substrate. Fe cation is bound by residues H212 and D214. K229 lines the substrate pocket. Fe cation is bound at residue H284. A disordered region spans residues 367 to 389; that stretch reads GLESGNGDEEAVDREPRRLSSRR. 2 positions are modified to phosphoserine: S390 and S394. Residue K505 forms a Glycyl lysine isopeptide (Lys-Gly) (interchain with G-Cter in SUMO2) linkage. Positions 532 to 557 are disordered; the sequence is VPTIPITKPHTMKPAPRLTPVRPAAA. At T550 the chain carries Phosphothreonine. Phosphoserine is present on S558. The CXXC-type zinc finger occupies 564 to 610; the sequence is ARRRRVRCRKCKACVQGECGVCHYCRDMKKFGGPGRMKQSCVLRQCL. C571, C574, C577, C582, C585, C588, C604, C609, C620, and C623 together coordinate Zn(2+). Residues 617–678 form a PHD-type zinc finger; the sequence is SVTCSLCGEV…CWECPKCYQE (62 aa). T632 bears the Phosphothreonine mark. Residues C642, C645, H650, C653, C672, and C675 each coordinate Zn(2+). Phosphoserine is present on S692. The interval 704-789 is disordered; it reads PLRSCDEPLT…PSGKKELSEV (86 aa). T713 is subject to Phosphothreonine. Phosphoserine occurs at positions 718 and 731. Composition is skewed to basic and acidic residues over residues 746 to 757 and 771 to 789; these read SDHHSASRDERF and TMVR…LSEV. Phosphoserine is present on residues S825, S832, S869, and S883. The tract at residues 839-887 is disordered; it reads HCPARTPQRGDEEGLGGEEEEEEEEEEEDDSAEEGGAARLNGRGSWAQD. Acidic residues predominate over residues 851-871; sequence EGLGGEEEEEEEEEEEDDSAE. Residues 889–936 enclose the F-box domain; it reads DESWMQREVWMSVFRYLSRRELCECMRVCKTWYKWCCDKRLWTKIDLS. LRR repeat units follow at residues 961–982 and 984–1010; these read WTNI…LKDL and LAGC…DLRW. ADP-ribosylarginine is present on R1020. LRR repeat units follow at residues 1048–1073, 1074–1103, 1104–1128, and 1129–1156; these read GLDI…DLSH, CSHL…NMAG, CNKL…DLRG, and CKQI…SDEK.

This sequence belongs to the JHDM1 histone demethylase family. In terms of assembly, interacts with CBX5/HP1A; the interaction promotes CBX5 localization to chromatin. The SKP1-KDM2A complex interacts with UBB. Part of a SCF (SKP1-cullin-F-box) protein ligase complex. The cofactor is Fe(2+). Mono-ADP-ribosylated at Arg-1020 in response to DNA damage, leading to displacement from chromatin, resulting in increased dimethylation of histone H3 at 'Lys-36'. In terms of tissue distribution, widely expressed, with highest levels in brain, testis and ovary, followed by lung.

It is found in the nucleus. The protein resides in the nucleoplasm. Its subcellular location is the chromosome. It catalyses the reaction N(6),N(6)-dimethyl-L-lysyl(36)-[histone H3] + 2 2-oxoglutarate + 2 O2 = L-lysyl(36)-[histone H3] + 2 formaldehyde + 2 succinate + 2 CO2. Histone demethylase that specifically demethylates 'Lys-36' of histone H3, thereby playing a central role in histone code. Preferentially demethylates dimethylated H3 'Lys-36' residue while it has weak or no activity for mono- and tri-methylated H3 'Lys-36'. May also recognize and bind to some phosphorylated proteins and promote their ubiquitination and degradation. Required to maintain the heterochromatic state. Associates with centromeres and represses transcription of small non-coding RNAs that are encoded by the clusters of satellite repeats at the centromere. Required to sustain centromeric integrity and genomic stability, particularly during mitosis. Regulates circadian gene expression by repressing the transcriptional activator activity of CLOCK-BMAL1 heterodimer and RORA in a catalytically-independent manner. This Homo sapiens (Human) protein is Lysine-specific demethylase 2A (KDM2A).